The sequence spans 171 residues: Co-chaperone protein HscB homolog (171 aa).

The J domain maps to 2 to 74 (NHFELFGLPP…ISRAEYLLSQ (73 aa)).

It belongs to the HscB family. Interacts with HscA and stimulates its ATPase activity.

Its function is as follows. Co-chaperone involved in the maturation of iron-sulfur cluster-containing proteins. Seems to help targeting proteins to be folded toward HscA. The protein is Co-chaperone protein HscB homolog of Vibrio vulnificus (strain CMCP6).